Consider the following 270-residue polypeptide: Plasmanylethanolamine desaturase 1 (270 aa).

3 helical membrane-spanning segments follow: residues 47–67 (WCSV…LLLL), 74–94 (PLVI…SGLV), and 161–181 (ALEQ…FGTF). Residues 186–190 (HKWSH) carry the Histidine box-1 motif. Positions 213–217 (HHRIH) match the Histidine box-2 motif.

The protein belongs to the fatty acid desaturase CarF family.

The protein resides in the endoplasmic reticulum membrane. It carries out the reaction a 1-(1,2-saturated alkyl)-2-acyl-sn-glycero-3-phosphoethanolamine + 2 Fe(II)-[cytochrome b5] + O2 + 2 H(+) = a 1-O-(1Z-alkenyl)-2-acyl-sn-glycero-3-phosphoethanolamine + 2 Fe(III)-[cytochrome b5] + 2 H2O. The catalysed reaction is a 1-O-hexadecyl-2-acyl-sn-glycero-3-phosphoethanolamine + 2 Fe(II)-[cytochrome b5] + O2 + 2 H(+) = a 1-O-(1Z-hexadecenyl)-2-acyl-sn-glycero-3-phosphoethanolamine + 2 Fe(III)-[cytochrome b5] + 2 H2O. It catalyses the reaction a 1-O-octadecyl-2-acyl-sn-glycero-3-phosphoethanolamine + 2 Fe(II)-[cytochrome b5] + O2 + 2 H(+) = a 1-O-(1Z-octadecenyl)-2-acyl-sn-glycero-3-phosphoethanolamine + 2 Fe(III)-[cytochrome b5] + 2 H2O. The enzyme catalyses a 1-O-(9Z-octadecenyl)-2-acyl-sn-glycero-3-phosphoethanolamine + 2 Fe(II)-[cytochrome b5] + O2 + 2 H(+) = a 1-O-(1Z,9Z-octadecadienyl)-2-acyl-sn-glycero-3-phosphoethanolamine + 2 Fe(III)-[cytochrome b5] + 2 H2O. Its pathway is lipid metabolism; fatty acid metabolism. In terms of biological role, plasmanylethanolamine desaturase involved in plasmalogen biogenesis in the endoplasmic reticulum membrane. Plasmalogens are glycerophospholipids with a hydrocarbon chain linked by a vinyl ether bond at the glycerol sn-1 position, and are involved in antioxidative and signaling mechanisms. The sequence is that of Plasmanylethanolamine desaturase 1 from Homo sapiens (Human).